Reading from the N-terminus, the 428-residue chain is 3-phosphoshikimate 1-carboxyvinyltransferase (428 aa).

Residues lysine 22, serine 23, and arginine 27 each coordinate 3-phosphoshikimate. Lysine 22 serves as a coordination point for phosphoenolpyruvate. Phosphoenolpyruvate-binding residues include glycine 96 and arginine 124. 7 residues coordinate 3-phosphoshikimate: serine 169, serine 170, glutamine 171, serine 197, aspartate 313, asparagine 336, and lysine 340. Position 171 (glutamine 171) interacts with phosphoenolpyruvate. Aspartate 313 acts as the Proton acceptor in catalysis. Residues arginine 344, arginine 386, and lysine 411 each contribute to the phosphoenolpyruvate site.

The protein belongs to the EPSP synthase family. Monomer.

It localises to the cytoplasm. The enzyme catalyses 3-phosphoshikimate + phosphoenolpyruvate = 5-O-(1-carboxyvinyl)-3-phosphoshikimate + phosphate. It functions in the pathway metabolic intermediate biosynthesis; chorismate biosynthesis; chorismate from D-erythrose 4-phosphate and phosphoenolpyruvate: step 6/7. In terms of biological role, catalyzes the transfer of the enolpyruvyl moiety of phosphoenolpyruvate (PEP) to the 5-hydroxyl of shikimate-3-phosphate (S3P) to produce enolpyruvyl shikimate-3-phosphate and inorganic phosphate. The polypeptide is 3-phosphoshikimate 1-carboxyvinyltransferase (Xenorhabdus nematophila (strain ATCC 19061 / DSM 3370 / CCUG 14189 / LMG 1036 / NCIMB 9965 / AN6)).